The chain runs to 448 residues: L-seryl-tRNA(Sec) selenium transferase (448 aa).

Lys-284 carries the post-translational modification N6-(pyridoxal phosphate)lysine.

The protein belongs to the SelA family. It depends on pyridoxal 5'-phosphate as a cofactor.

It is found in the cytoplasm. The catalysed reaction is L-seryl-tRNA(Sec) + selenophosphate + H(+) = L-selenocysteinyl-tRNA(Sec) + phosphate. It functions in the pathway aminoacyl-tRNA biosynthesis; selenocysteinyl-tRNA(Sec) biosynthesis; selenocysteinyl-tRNA(Sec) from L-seryl-tRNA(Sec) (bacterial route): step 1/1. Its function is as follows. Converts seryl-tRNA(Sec) to selenocysteinyl-tRNA(Sec) required for selenoprotein biosynthesis. The chain is L-seryl-tRNA(Sec) selenium transferase from Nautilia profundicola (strain ATCC BAA-1463 / DSM 18972 / AmH).